Here is a 127-residue protein sequence, read N- to C-terminus: Small ribosomal subunit protein uS11 (127 aa).

Belongs to the universal ribosomal protein uS11 family. Part of the 30S ribosomal subunit. Interacts with proteins S7 and S18. Binds to IF-3.

Its function is as follows. Located on the platform of the 30S subunit, it bridges several disparate RNA helices of the 16S rRNA. Forms part of the Shine-Dalgarno cleft in the 70S ribosome. The sequence is that of Small ribosomal subunit protein uS11 from Chlorobium luteolum (strain DSM 273 / BCRC 81028 / 2530) (Pelodictyon luteolum).